Reading from the N-terminus, the 338-residue chain is MSFEQKPKVTVILANLGTPDEATVPAVRRFLKQFLSDPRVIEIPKFIWWIILNLFVLPFRPKRVAHAYASVWSTDSPMREIVFEQTQRVQAYLERENKQFDLTVLPAMTYGNPGIDAVLEKLSAHPQEHVILLPLFPQYSATSTAPLYDAFAKWIPTQRNLPGLTIIKDYYQHPMFIQALAESVLAYQEQHGKPEKLLMSFHGIPQPYADKGDPYADRCRITAKLVAEALHLKDVEWAISFQSRFGKQEWVKPYTDQLLQDWAKQGVKSVQVLSPAFSADCLETLEELAIQNAELFQQAGGGSYAYIPALNSDQAHIDLLAGLVQANLDALTHTLAHR.

Residues His202 and Glu283 each contribute to the Fe cation site.

The protein belongs to the ferrochelatase family.

Its subcellular location is the cytoplasm. It catalyses the reaction heme b + 2 H(+) = protoporphyrin IX + Fe(2+). It participates in porphyrin-containing compound metabolism; protoheme biosynthesis; protoheme from protoporphyrin-IX: step 1/1. In terms of biological role, catalyzes the ferrous insertion into protoporphyrin IX. The sequence is that of Ferrochelatase from Acinetobacter baumannii (strain ATCC 17978 / DSM 105126 / CIP 53.77 / LMG 1025 / NCDC KC755 / 5377).